Reading from the N-terminus, the 322-residue chain is NADH-quinone oxidoreductase subunit H (322 aa).

Helical transmembrane passes span 12–32 (IGKALIVLVGIVGAGAFMSFI), 79–99 (IFILAPIIAFTAFILAFAVVP), 111–131 (VGLLYILAIAGLAVYAVLFAG), 151–171 (LSYEVFLGLSLMGIVIQTGSF), 183–203 (LWNVVPQFLGFITFLFAGVAV), 234–254 (FFVGEYIGIVLISSLIVTLFF), 262–282 (LPPFFWFALKTACFMVFFILL), and 301–321 (VCLPLTLINMLITAAVVLMNV).

Belongs to the complex I subunit 1 family. In terms of assembly, NDH-1 is composed of 13 different subunits. Subunits NuoA, H, J, K, L, M, N constitute the membrane sector of the complex.

It localises to the cell inner membrane. The enzyme catalyses a quinone + NADH + 5 H(+)(in) = a quinol + NAD(+) + 4 H(+)(out). Functionally, NDH-1 shuttles electrons from NADH, via FMN and iron-sulfur (Fe-S) centers, to quinones in the respiratory chain. The immediate electron acceptor for the enzyme in this species is believed to be ubiquinone. Couples the redox reaction to proton translocation (for every two electrons transferred, four hydrogen ions are translocated across the cytoplasmic membrane), and thus conserves the redox energy in a proton gradient. This subunit may bind ubiquinone. In Shewanella oneidensis (strain ATCC 700550 / JCM 31522 / CIP 106686 / LMG 19005 / NCIMB 14063 / MR-1), this protein is NADH-quinone oxidoreductase subunit H.